The chain runs to 457 residues: Siroheme synthase (457 aa).

The precorrin-2 dehydrogenase /sirohydrochlorin ferrochelatase stretch occupies residues 1–204; the sequence is MDHLPIFCQL…NDQKAITETT (204 aa). Residues 22-23 and 43-44 each bind NAD(+); these read DV and LA. S128 is modified (phosphoserine). The uroporphyrinogen-III C-methyltransferase stretch occupies residues 216-457; sequence GEVVLVGAGP…RDKLNWFSNH (242 aa). P225 lines the S-adenosyl-L-methionine pocket. Residue D248 is the Proton acceptor of the active site. The active-site Proton donor is the K270. Residues 301 to 303, I306, 331 to 332, M382, and G411 contribute to the S-adenosyl-L-methionine site; these read GGD and TA.

This sequence in the N-terminal section; belongs to the precorrin-2 dehydrogenase / sirohydrochlorin ferrochelatase family. It in the C-terminal section; belongs to the precorrin methyltransferase family.

It catalyses the reaction uroporphyrinogen III + 2 S-adenosyl-L-methionine = precorrin-2 + 2 S-adenosyl-L-homocysteine + H(+). The catalysed reaction is precorrin-2 + NAD(+) = sirohydrochlorin + NADH + 2 H(+). The enzyme catalyses siroheme + 2 H(+) = sirohydrochlorin + Fe(2+). It functions in the pathway cofactor biosynthesis; adenosylcobalamin biosynthesis; precorrin-2 from uroporphyrinogen III: step 1/1. It participates in cofactor biosynthesis; adenosylcobalamin biosynthesis; sirohydrochlorin from precorrin-2: step 1/1. Its pathway is porphyrin-containing compound metabolism; siroheme biosynthesis; precorrin-2 from uroporphyrinogen III: step 1/1. The protein operates within porphyrin-containing compound metabolism; siroheme biosynthesis; siroheme from sirohydrochlorin: step 1/1. It functions in the pathway porphyrin-containing compound metabolism; siroheme biosynthesis; sirohydrochlorin from precorrin-2: step 1/1. Multifunctional enzyme that catalyzes the SAM-dependent methylations of uroporphyrinogen III at position C-2 and C-7 to form precorrin-2 via precorrin-1. Then it catalyzes the NAD-dependent ring dehydrogenation of precorrin-2 to yield sirohydrochlorin. Finally, it catalyzes the ferrochelation of sirohydrochlorin to yield siroheme. This is Siroheme synthase from Escherichia coli O8 (strain IAI1).